The chain runs to 65 residues: Alpha-toxin Bot1 (65 aa).

The 63-residue stretch at 2–64 (RDAYIAQPEN…VPIRIPGKCH (63 aa)) folds into the LCN-type CS-alpha/beta domain. 4 cysteine pairs are disulfide-bonded: Cys-12/Cys-63, Cys-16/Cys-36, Cys-22/Cys-46, and Cys-26/Cys-48. Phe-65 is modified (phenylalanine amide).

Belongs to the long (4 C-C) scorpion toxin superfamily. Sodium channel inhibitor family. Alpha subfamily. As to expression, expressed by the venom gland.

The protein localises to the secreted. In terms of biological role, alpha toxins bind voltage-independently at site-3 of sodium channels (Nav) and inhibit the inactivation of the activated channels, thereby blocking neuronal transmission. The sequence is that of Alpha-toxin Bot1 from Buthus occitanus tunetanus (Common European scorpion).